Here is a 343-residue protein sequence, read N- to C-terminus: MEQEETYLELYLDQCAAQDGLAPPRSPLFSPVVPYDMYILNASNPDTAFNSNPEVKETSGDFSSVDLSFLPDEVTQENKDQPVISKHETEENSESQSPQSRLPSPSEQDVGLGLNSSSLSNSHSQLHPGDTDSVQPSPEKPNSDSLSLASITPMTPMTPISECCGIVPQLQNIVSTVNLACKLDLKKIALHAKNAEYNPKRFAAVIMRIREPRTTALIFSSGKMVCTGAKSEEQSRLAARKYARVVQKLGFPARFLDFKIQNMVGSCDVRFPIRLEGLVLTHQQFSSYEPELFPGLIYRMVKPRIVLLIFVSGKVVLTGAKERSEIYEAFENIYPILKGFKKA.

A disordered region spans residues Pro71 to Thr152. Over residues Gln76–Glu90 the composition is skewed to basic and acidic residues. Positions Glu94 to His127 are enriched in low complexity. A compositionally biased stretch (polar residues) spans Ser143–Thr152.

Belongs to the TBP family. In terms of assembly, interacts with TAF3. As to expression, ubiquitously expressed in all tissues examined with highest levels in heart, lung, ovary, spleen and testes.

The protein localises to the cytoplasm. Its subcellular location is the nucleus. Transcription factor required in complex with TAF3 for the differentiation of myoblasts into myocytes. The complex replaces TFIID at specific promoters at an early stage in the differentiation process. This chain is TATA box-binding protein-like 2, found in Homo sapiens (Human).